The following is a 362-amino-acid chain: Serpentine receptor class delta-2 (362 aa).

Transmembrane regions (helical) follow at residues 27–47 (LSCL…YLIW), 57–77 (YAIY…ISFF), 104–124 (FCYF…WILL), 144–164 (LIRN…VYVF), 209–229 (LISI…ILYF), 264–284 (GIPI…FGII), and 292–312 (ITFR…IIFV).

Belongs to the nematode receptor-like protein srd family.

The protein localises to the membrane. Thought to be a chemosensory receptor. This Caenorhabditis elegans protein is Serpentine receptor class delta-2 (srd-2).